We begin with the raw amino-acid sequence, 611 residues long: tRNA uridine 5-carboxymethylaminomethyl modification enzyme MnmG (611 aa).

Residues 12–17 (GGGHAG), Val124, and Ser179 each bind FAD. 271-285 (GPRYCPSVEDKIVRF) lines the NAD(+) pocket. Gln368 serves as a coordination point for FAD.

Belongs to the MnmG family. Homodimer. Heterotetramer of two MnmE and two MnmG subunits. It depends on FAD as a cofactor.

The protein resides in the cytoplasm. Its function is as follows. NAD-binding protein involved in the addition of a carboxymethylaminomethyl (cmnm) group at the wobble position (U34) of certain tRNAs, forming tRNA-cmnm(5)s(2)U34. The polypeptide is tRNA uridine 5-carboxymethylaminomethyl modification enzyme MnmG (Mycoplasma mobile (strain ATCC 43663 / 163K / NCTC 11711) (Mesomycoplasma mobile)).